The chain runs to 478 residues: ATP synthase subunit beta (478 aa).

158-165 (GGAGVGKT) contacts ATP.

The protein belongs to the ATPase alpha/beta chains family. In terms of assembly, F-type ATPases have 2 components, CF(1) - the catalytic core - and CF(0) - the membrane proton channel. CF(1) has five subunits: alpha(3), beta(3), gamma(1), delta(1), epsilon(1). CF(0) has three main subunits: a(1), b(2) and c(9-12). The alpha and beta chains form an alternating ring which encloses part of the gamma chain. CF(1) is attached to CF(0) by a central stalk formed by the gamma and epsilon chains, while a peripheral stalk is formed by the delta and b chains.

The protein localises to the cell inner membrane. It carries out the reaction ATP + H2O + 4 H(+)(in) = ADP + phosphate + 5 H(+)(out). Its function is as follows. Produces ATP from ADP in the presence of a proton gradient across the membrane. The catalytic sites are hosted primarily by the beta subunits. The protein is ATP synthase subunit beta of Rhizobium leguminosarum bv. trifolii (strain WSM2304).